The sequence spans 447 residues: Tubulin beta chain (447 aa).

Residues Gln-11, Glu-69, Ser-138, Gly-142, Thr-143, Gly-144, Asn-204, and Asn-226 each contribute to the GTP site. Glu-69 provides a ligand contact to Mg(2+). The segment at Gln-424–Glu-447 is disordered. The span at Glu-432 to Glu-447 shows a compositional bias: acidic residues.

This sequence belongs to the tubulin family. Dimer of alpha and beta chains. A typical microtubule is a hollow water-filled tube with an outer diameter of 25 nm and an inner diameter of 15 nM. Alpha-beta heterodimers associate head-to-tail to form protofilaments running lengthwise along the microtubule wall with the beta-tubulin subunit facing the microtubule plus end conferring a structural polarity. Microtubules usually have 13 protofilaments but different protofilament numbers can be found in some organisms and specialized cells. Requires Mg(2+) as cofactor.

Its subcellular location is the cytoplasm. The protein resides in the cytoskeleton. Its function is as follows. Tubulin is the major constituent of microtubules, a cylinder consisting of laterally associated linear protofilaments composed of alpha- and beta-tubulin heterodimers. Microtubules grow by the addition of GTP-tubulin dimers to the microtubule end, where a stabilizing cap forms. Below the cap, tubulin dimers are in GDP-bound state, owing to GTPase activity of alpha-tubulin. This is Tubulin beta chain from Venturia inaequalis (Apple scab fungus).